We begin with the raw amino-acid sequence, 267 residues long: Very long chain fatty acid elongase 6 (267 aa).

N2 carries an N-linked (GlcNAc...) asparagine glycan. Helical transmembrane passes span 34 to 51 (FLFS…RHLM), 70 to 90 (LAVF…YILM), 111 to 131 (FWAY…IFII), 136 to 156 (KLIF…WYSY), 159 to 179 (MVAG…VMYS), 197 to 217 (FITL…YLVF), and 234 to 254 (IFWS…FFFE).

It belongs to the ELO family. ELOVL6 subfamily. Post-translationally, N-Glycosylated. In terms of tissue distribution, expressed in liver and barely in brain.

The protein localises to the endoplasmic reticulum membrane. The catalysed reaction is a very-long-chain acyl-CoA + malonyl-CoA + H(+) = a very-long-chain 3-oxoacyl-CoA + CO2 + CoA. It catalyses the reaction hexadecanoyl-CoA + malonyl-CoA + H(+) = 3-oxooctadecanoyl-CoA + CO2 + CoA. The enzyme catalyses (9Z)-hexadecenoyl-CoA + malonyl-CoA + H(+) = 3-oxo-(11Z)-octadecenoyl-CoA + CO2 + CoA. It carries out the reaction dodecanoyl-CoA + malonyl-CoA + H(+) = 3-oxotetradecanoyl-CoA + CO2 + CoA. The catalysed reaction is tetradecanoyl-CoA + malonyl-CoA + H(+) = 3-oxohexadecanoyl-CoA + CO2 + CoA. It catalyses the reaction (9Z)-octadecenoyl-CoA + malonyl-CoA + H(+) = 3-oxo-(11Z)-eicosenoyl-CoA + CO2 + CoA. The enzyme catalyses (9Z,12Z)-octadecadienoyl-CoA + malonyl-CoA + H(+) = (11Z,14Z)-3-oxoicosa-11,14-dienoyl-CoA + CO2 + CoA. It carries out the reaction (9Z,12Z,15Z)-octadecatrienoyl-CoA + malonyl-CoA + H(+) = (11Z,14Z,17Z)-3-oxoeicosatrienoyl-CoA + CO2 + CoA. It participates in lipid metabolism; fatty acid biosynthesis. Its activity is regulated as follows. The reaction is stimulated by the presence of HSD17B12, the enzyme catalyzing the second step of the elongation cycle. Functionally, catalyzes the first and rate-limiting reaction of the four reactions that constitute the long-chain fatty acids elongation cycle. This endoplasmic reticulum-bound enzymatic process allows the addition of 2 carbons to the chain of long- and very long-chain fatty acids (VLCFAs) per cycle. Condensing enzyme that elongates fatty acids with 12, 14 and 16 carbons with higher activity toward C16:0 acyl-CoAs. Catalyzes the synthesis of unsaturated C16 long chain fatty acids and, to a lesser extent, C18:0 and those with low desaturation degree. May participate in the production of saturated and monounsaturated VLCFAs of different chain lengths that are involved in multiple biological processes as precursors of membrane lipids and lipid mediators. This is Very long chain fatty acid elongase 6 from Rattus norvegicus (Rat).